The following is a 365-amino-acid chain: Uroporphyrinogen decarboxylase (365 aa).

Substrate contacts are provided by residues 27–31, Asp-77, Tyr-154, Ser-209, and His-327; that span reads RQAGR.

The protein belongs to the uroporphyrinogen decarboxylase family. Homodimer.

The protein resides in the cytoplasm. It carries out the reaction uroporphyrinogen III + 4 H(+) = coproporphyrinogen III + 4 CO2. It participates in porphyrin-containing compound metabolism; protoporphyrin-IX biosynthesis; coproporphyrinogen-III from 5-aminolevulinate: step 4/4. In terms of biological role, catalyzes the decarboxylation of four acetate groups of uroporphyrinogen-III to yield coproporphyrinogen-III. The chain is Uroporphyrinogen decarboxylase from Alkalilimnicola ehrlichii (strain ATCC BAA-1101 / DSM 17681 / MLHE-1).